We begin with the raw amino-acid sequence, 43 residues long: Snake venom metalloproteinase crotalin (43 aa).

In terms of domain architecture, Peptidase M12B spans 1 to 43 (LLRRKSHDHAQNHDGDKCLRGASLGYYQSFLNQYKPQCILNKP). His-13 lines the Zn(2+) pocket.

It belongs to the venom metalloproteinase (M12B) family. P-I subfamily. Monomer. Requires Zn(2+) as cofactor. Post-translationally, this protein autoproteolytically degrades to 10 kDa and 14 kDa fragments in the presence of SDS. Interestingly, the two fragments, as well as reduced crotalin are able to bind vWF, indicating that the binding activity does not require a specific protein conformation. As to expression, expressed by the venom gland.

The protein resides in the secreted. Its function is as follows. Snake venom zinc metalloproteinase that inhibits ristocin-induced platelet aggregation by abolishing the binding of von Willebrand factor (vWF) to platelet glycoprotein Ib alpha (GPIBA) through the cleavage of both GP1BA and vWF. Also has fibrinogenolytic activities by degrading the alpha- (FGA) and beta-chain (FGB) of fibrinogen. In vivo, induces a slight hemorrhage when applied to chick chorioallantoic membrane and has potent antithrombic effect. The sequence is that of Snake venom metalloproteinase crotalin from Crotalus atrox (Western diamondback rattlesnake).